Reading from the N-terminus, the 227-residue chain is Cytochrome c oxidase subunit 2 (227 aa).

At 1-14 (MAYPVQLGFQDAAS) the chain is on the mitochondrial intermembrane side. The chain crosses the membrane as a helical span at residues 15 to 45 (PIMEELLYFHDHTLMIMFLISSLVLYIISLM). The Mitochondrial matrix segment spans residues 46 to 59 (LTTELMHTNTMDAQ). The chain crosses the membrane as a helical span at residues 60–87 (EVETVWTILPAAILILIALPSLRILYMM). At 88–227 (DEITTPSLTL…HFEEWLLSML (140 aa)) the chain is on the mitochondrial intermembrane side. Cu cation-binding residues include H161, C196, E198, C200, H204, and M207. E198 contacts Mg(2+).

It belongs to the cytochrome c oxidase subunit 2 family. In terms of assembly, component of the cytochrome c oxidase (complex IV, CIV), a multisubunit enzyme composed of 14 subunits. The complex is composed of a catalytic core of 3 subunits MT-CO1, MT-CO2 and MT-CO3, encoded in the mitochondrial DNA, and 11 supernumerary subunits COX4I, COX5A, COX5B, COX6A, COX6B, COX6C, COX7A, COX7B, COX7C, COX8 and NDUFA4, which are encoded in the nuclear genome. The complex exists as a monomer or a dimer and forms supercomplexes (SCs) in the inner mitochondrial membrane with NADH-ubiquinone oxidoreductase (complex I, CI) and ubiquinol-cytochrome c oxidoreductase (cytochrome b-c1 complex, complex III, CIII), resulting in different assemblies (supercomplex SCI(1)III(2)IV(1) and megacomplex MCI(2)III(2)IV(2)). Found in a complex with TMEM177, COA6, COX18, COX20, SCO1 and SCO2. Interacts with TMEM177 in a COX20-dependent manner. Interacts with COX20. Interacts with COX16. The cofactor is Cu cation.

Its subcellular location is the mitochondrion inner membrane. The catalysed reaction is 4 Fe(II)-[cytochrome c] + O2 + 8 H(+)(in) = 4 Fe(III)-[cytochrome c] + 2 H2O + 4 H(+)(out). Functionally, component of the cytochrome c oxidase, the last enzyme in the mitochondrial electron transport chain which drives oxidative phosphorylation. The respiratory chain contains 3 multisubunit complexes succinate dehydrogenase (complex II, CII), ubiquinol-cytochrome c oxidoreductase (cytochrome b-c1 complex, complex III, CIII) and cytochrome c oxidase (complex IV, CIV), that cooperate to transfer electrons derived from NADH and succinate to molecular oxygen, creating an electrochemical gradient over the inner membrane that drives transmembrane transport and the ATP synthase. Cytochrome c oxidase is the component of the respiratory chain that catalyzes the reduction of oxygen to water. Electrons originating from reduced cytochrome c in the intermembrane space (IMS) are transferred via the dinuclear copper A center (CU(A)) of subunit 2 and heme A of subunit 1 to the active site in subunit 1, a binuclear center (BNC) formed by heme A3 and copper B (CU(B)). The BNC reduces molecular oxygen to 2 water molecules using 4 electrons from cytochrome c in the IMS and 4 protons from the mitochondrial matrix. The polypeptide is Cytochrome c oxidase subunit 2 (MT-CO2) (Hapalemur griseus (Gray gentle lemur)).